The sequence spans 578 residues: Sulfite reductase [NADPH] hemoprotein beta-component (578 aa).

The segment covering 1 to 11 has biased composition (polar residues); it reads MSANQQSNSQE. The disordered stretch occupies residues 1–20; the sequence is MSANQQSNSQEVLGEVLGPL. The [4Fe-4S] cluster site is built by C441, C447, C487, and C491. Position 491 (C491) interacts with siroheme.

The protein belongs to the nitrite and sulfite reductase 4Fe-4S domain family. As to quaternary structure, alpha(8)-beta(8). The alpha component is a flavoprotein, the beta component is a hemoprotein. Siroheme is required as a cofactor. Requires [4Fe-4S] cluster as cofactor.

The enzyme catalyses hydrogen sulfide + 3 NADP(+) + 3 H2O = sulfite + 3 NADPH + 4 H(+). Its pathway is sulfur metabolism; hydrogen sulfide biosynthesis; hydrogen sulfide from sulfite (NADPH route): step 1/1. Its function is as follows. Component of the sulfite reductase complex that catalyzes the 6-electron reduction of sulfite to sulfide. This is one of several activities required for the biosynthesis of L-cysteine from sulfate. The chain is Sulfite reductase [NADPH] hemoprotein beta-component from Vibrio campbellii (strain ATCC BAA-1116).